Consider the following 209-residue polypeptide: Orotate phosphoribosyltransferase (209 aa).

5-phospho-alpha-D-ribose 1-diphosphate-binding positions include Arg96, Lys100, His102, and 122-130 (EDLISTGGS). Ser126 is a binding site for orotate.

This sequence belongs to the purine/pyrimidine phosphoribosyltransferase family. PyrE subfamily. Homodimer. Requires Mg(2+) as cofactor.

It catalyses the reaction orotidine 5'-phosphate + diphosphate = orotate + 5-phospho-alpha-D-ribose 1-diphosphate. Its pathway is pyrimidine metabolism; UMP biosynthesis via de novo pathway; UMP from orotate: step 1/2. Its function is as follows. Catalyzes the transfer of a ribosyl phosphate group from 5-phosphoribose 1-diphosphate to orotate, leading to the formation of orotidine monophosphate (OMP). This is Orotate phosphoribosyltransferase from Streptococcus agalactiae serotype Ia (strain ATCC 27591 / A909 / CDC SS700).